We begin with the raw amino-acid sequence, 776 residues long: Mitochondrial intermediate peptidase (776 aa).

A mitochondrion-targeting transit peptide spans 1-38 (MLNSARTVLARHSARQLYRFRGCLVHQQRHRHQVQRTL). Residue His560 participates in Zn(2+) binding. Glu561 is a catalytic residue. The Zn(2+) site is built by His564 and His567.

The protein belongs to the peptidase M3 family. Requires Zn(2+) as cofactor.

It is found in the mitochondrion matrix. It carries out the reaction Release of an N-terminal octapeptide as second stage of processing of some proteins imported into the mitochondrion.. Functionally, cleaves proteins, imported into the mitochondrion, to their mature size. While most mitochondrial precursor proteins are processed to the mature form in one step by mitochondrial processing peptidase (MPP), the sequential cleavage by MIP of an octapeptide after initial processing by MPP is a required step for a subgroup of nuclear-encoded precursor proteins destined for the matrix or the inner membrane. The sequence is that of Mitochondrial intermediate peptidase (OCT1) from Coprinopsis cinerea (strain Okayama-7 / 130 / ATCC MYA-4618 / FGSC 9003) (Inky cap fungus).